A 456-amino-acid chain; its full sequence is MLPSQSPAIFTVSRLNQTVRLLLEHEMGQVWISGEISNFTQPASGHWYFTLKDDTAQVRCAMFRNSNRRVTFRPQHGQQVLVRANITLYEPRGDYQIIVESMQPAGEGLLQQKYEQLKAKLQAEGLFDQQYKKPLPSPAHCVGVITSKTGAALHDILHVLKRRDPSLPVIIYPTAVQGDDAPGQIVRAIELANQRNECDVLIVGRGGGSLEDLWSFNDERVARAIFASRIPVVSAVGHETDVTIADFVADLRAPTPSAAAEVVSRNQQELLRQVQSTRQRLEMAMDYYLANRTRRFTQIHHRLQQQHPQLRLARQQTMLERLQKRMSFALENQLKRTGQQQQRLTQRLNQQNPQPKIHRAQTRIQQLEYRLAEILRAQLSATRERFGNAVTHLEAVSPLSTLARGYSVTTATDGNVLKKVKQVKAGEMLTTRLEDGWIESEVKNIQPVKKSRKKVH.

Belongs to the XseA family. In terms of assembly, heterooligomer composed of large and small subunits.

It is found in the cytoplasm. It catalyses the reaction Exonucleolytic cleavage in either 5'- to 3'- or 3'- to 5'-direction to yield nucleoside 5'-phosphates.. In terms of biological role, bidirectionally degrades single-stranded DNA into large acid-insoluble oligonucleotides, which are then degraded further into small acid-soluble oligonucleotides. This chain is Exodeoxyribonuclease 7 large subunit, found in Escherichia coli (strain SE11).